The primary structure comprises 482 residues: tRNA sulfurtransferase (482 aa).

In terms of domain architecture, THUMP spans 61–165 (PAIRDALTRI…NDRLLLVKGR (105 aa)). ATP contacts are provided by residues 183 to 184 (LI), Lys-265, Gly-287, and Gln-296. Cys-344 and Cys-456 are oxidised to a cystine. Residues 404–482 (FGANDAILDI…GFSNVKVYRP (79 aa)) form the Rhodanese domain. The Cysteine persulfide intermediate role is filled by Cys-456.

The protein belongs to the ThiI family.

The protein localises to the cytoplasm. It catalyses the reaction [ThiI sulfur-carrier protein]-S-sulfanyl-L-cysteine + a uridine in tRNA + 2 reduced [2Fe-2S]-[ferredoxin] + ATP + H(+) = [ThiI sulfur-carrier protein]-L-cysteine + a 4-thiouridine in tRNA + 2 oxidized [2Fe-2S]-[ferredoxin] + AMP + diphosphate. It carries out the reaction [ThiS sulfur-carrier protein]-C-terminal Gly-Gly-AMP + S-sulfanyl-L-cysteinyl-[cysteine desulfurase] + AH2 = [ThiS sulfur-carrier protein]-C-terminal-Gly-aminoethanethioate + L-cysteinyl-[cysteine desulfurase] + A + AMP + 2 H(+). It functions in the pathway cofactor biosynthesis; thiamine diphosphate biosynthesis. Its function is as follows. Catalyzes the ATP-dependent transfer of a sulfur to tRNA to produce 4-thiouridine in position 8 of tRNAs, which functions as a near-UV photosensor. Also catalyzes the transfer of sulfur to the sulfur carrier protein ThiS, forming ThiS-thiocarboxylate. This is a step in the synthesis of thiazole, in the thiamine biosynthesis pathway. The sulfur is donated as persulfide by IscS. The sequence is that of tRNA sulfurtransferase from Klebsiella pneumoniae subsp. pneumoniae (strain ATCC 700721 / MGH 78578).